The following is a 219-amino-acid chain: Thiopurine S-methyltransferase (219 aa).

S-adenosyl-L-methionine contacts are provided by Trp-10, Leu-45, Glu-66, and Arg-123.

The protein belongs to the class I-like SAM-binding methyltransferase superfamily. TPMT family.

The protein localises to the cytoplasm. The enzyme catalyses S-adenosyl-L-methionine + a thiopurine = S-adenosyl-L-homocysteine + a thiopurine S-methylether.. In Marinobacter nauticus (strain ATCC 700491 / DSM 11845 / VT8) (Marinobacter aquaeolei), this protein is Thiopurine S-methyltransferase.